The primary structure comprises 190 residues: Selenoprotein S (190 aa).

The helical transmembrane segment at 28 to 48 threads the bilayer; that stretch reads SLLASYGWYILFSCILLYIVI. Positions 78–90 are VCP/p97-interacting motif (VIM); that stretch reads RQEALAAARLRMQ. The disordered stretch occupies residues 115-190; sequence KIEMWDSMQE…RRGPSSGGUN (76 aa). Over residues 160-174 the composition is skewed to gly residues; that stretch reads RGGGYNPLTGEGGGT. A non-standard amino acid (selenocysteine) is located at residue U189.

Belongs to the selenoprotein S family. Interacts with DERL1 and (via VIM motif) with VCP, suggesting that it forms a membrane complex with DERL1 that serves as a receptor for VCP. Also interacts with DERL2, DERL3 and SELENOK. The SELENOK-SELENOS complex interacts with VCP. Interacts with CCDC47. Post-translationally, truncated SELENOS proteins produced by failed UGA/Sec decoding are ubiquitinated by the CRL2(KLHDC2) and CRL2(KLHDC3) complexes, which recognizes the glycine (Gly) at the C-terminus of truncated SELENOS proteins. Truncated SELENOS proteins produced by failed UGA/Sec decoding are also ubiquitinated by the CRL5(KLHDC1) complex.

The protein resides in the endoplasmic reticulum membrane. It is found in the cytoplasm. In terms of biological role, involved in the degradation process of misfolded endoplasmic reticulum (ER) luminal proteins. Participates in the transfer of misfolded proteins from the ER to the cytosol, where they are destroyed by the proteasome in a ubiquitin-dependent manner. Probably acts by serving as a linker between DERL1, which mediates the retrotranslocation of misfolded proteins into the cytosol, and the ATPase complex VCP, which mediates the translocation and ubiquitination. The polypeptide is Selenoprotein S (Mus musculus (Mouse)).